A 232-amino-acid polypeptide reads, in one-letter code: Protein FAM246A (232 aa).

3 disordered regions span residues 1 to 47, 153 to 178, and 191 to 232; these read MATP…RAPG, LPPP…RGPT, and AASR…GGGD. A compositionally biased stretch (basic and acidic residues) spans 19 to 31; the sequence is EVLRRVTGRRRDP. A compositionally biased stretch (basic residues) spans 211–220; it reads APVRKNHKKM.

It belongs to the FAM246 family.

The sequence is that of Protein FAM246A from Homo sapiens (Human).